A 554-amino-acid polypeptide reads, in one-letter code: Thermosome subunit alpha (554 aa).

The segment at P530–F554 is disordered.

The protein belongs to the TCP-1 chaperonin family. In terms of assembly, forms a Heterooligomeric complex of two stacked eight-membered rings.

In terms of biological role, molecular chaperone; binds unfolded polypeptides in vitro, and has a weak ATPase activity. This is Thermosome subunit alpha (thsA) from Aeropyrum pernix (strain ATCC 700893 / DSM 11879 / JCM 9820 / NBRC 100138 / K1).